We begin with the raw amino-acid sequence, 359 residues long: GalNAc-alpha-(1-&gt;4)-GalNAc-alpha-(1-&gt;3)-diNAcBac-PP-undecaprenol alpha-1,4-N-acetyl-D-galactosaminyltransferase (359 aa).

Glu-17 provides a ligand contact to substrate. Residue Tyr-45 coordinates UDP-N-acetyl-alpha-D-galactosamine. Position 71–74 (Arg-71–Lys-74) interacts with substrate. Residues His-117, Arg-190, Lys-195, Val-246, and Glu-266–Glu-274 contribute to the UDP-N-acetyl-alpha-D-galactosamine site. Position 190 (Arg-190) interacts with substrate.

It belongs to the glycosyltransferase group 1 family.

It is found in the cell inner membrane. The catalysed reaction is N-acetyl-alpha-D-galactosaminyl-(1-&gt;4)-N-acetyl-alpha-D-galactosaminyl-(1-&gt;3)-N,N'-diacetyl-alpha-D-bacillosaminyl-tri-trans,heptacis-undecaprenyl diphosphate + 3 UDP-N-acetyl-alpha-D-galactosamine = [alpha-D-GalNAc-(1-&gt;4)]4-alpha-D-GalNAc-(1-&gt;3)-alpha-D-diNAcBac-tri-trans,hepta-cis-undecaprenyl diphosphate + 3 UDP + 3 H(+). It functions in the pathway protein modification; protein glycosylation. Processive glycosyltransferase that is part of the biosynthetic pathway of the lipid-linked oligosaccharide (LLO) that serves as the glycan donor in bacterial protein N-glycosylation. Catalyzes the transfer of exactly three alpha-(1-&gt;4)-N-acetylgalactosamine (GalNAc) units to the growing LLO precursor, GalNAc-alpha-(1-&gt;4)-GalNAc-alpha-(1-&gt;3)-diNAcBac-PP-undecaprenyl. Cannot accept UDP-GlcNAc as substrate. This Campylobacter jejuni subsp. jejuni serotype O:2 (strain ATCC 700819 / NCTC 11168) protein is GalNAc-alpha-(1-&gt;4)-GalNAc-alpha-(1-&gt;3)-diNAcBac-PP-undecaprenol alpha-1,4-N-acetyl-D-galactosaminyltransferase.